A 368-amino-acid polypeptide reads, in one-letter code: E3 ubiquitin-protein ligase makorin (368 aa).

2 C3H1-type zinc fingers span residues 2 to 29 (STKR…HDWN) and 30 to 57 (DQPN…HVKV). The tract at residues 58 to 81 (SRNPTVAPPPSSSTTTRASSSLQP) is disordered. Low complexity predominate over residues 69 to 78 (SSTTTRASSS). The C3H1-type 3 zinc-finger motif lies at 147–174 (PADLPICSFAAGGNCPYGEECPQMHGDL). A makorin-type Cys-His region spans residues 175-202 (CTTCGKMCLHPYRPDEREEHTKLCEKNH). The RING-type zinc-finger motif lies at 216-274 (CSVCLDRVLSKPTAAERKFGLLSECDHPFCISCIRNWRNNSPTSGMDVNSALRACPICR). Residues 303-332 (KLKSIDCKYFDFGTGTCPFGSSCFYKHAYR) form a C3H1-type 4 zinc finger.

In terms of tissue distribution, expressed in primary roots and leaves. Detected in vascular bundle tissues.

It carries out the reaction S-ubiquitinyl-[E2 ubiquitin-conjugating enzyme]-L-cysteine + [acceptor protein]-L-lysine = [E2 ubiquitin-conjugating enzyme]-L-cysteine + N(6)-ubiquitinyl-[acceptor protein]-L-lysine.. It participates in protein modification; protein ubiquitination. E3 ubiquitin ligase catalyzing the covalent attachment of ubiquitin moieties onto substrate proteins. This is E3 ubiquitin-protein ligase makorin (MKRN) from Oryza sativa subsp. japonica (Rice).